We begin with the raw amino-acid sequence, 246 residues long: 2,3-bisphosphoglycerate-dependent phosphoglycerate mutase (246 aa).

Residues 8 to 15 (RHGQSQWN), 21 to 22 (TG), R60, 87 to 90 (EKHY), K98, 114 to 115 (RR), and 183 to 184 (GN) contribute to the substrate site. Catalysis depends on H9, which acts as the Tele-phosphohistidine intermediate. The active-site Proton donor/acceptor is the E87.

It belongs to the phosphoglycerate mutase family. BPG-dependent PGAM subfamily. Homodimer.

The enzyme catalyses (2R)-2-phosphoglycerate = (2R)-3-phosphoglycerate. It functions in the pathway carbohydrate degradation; glycolysis; pyruvate from D-glyceraldehyde 3-phosphate: step 3/5. In terms of biological role, catalyzes the interconversion of 2-phosphoglycerate and 3-phosphoglycerate. In Dichelobacter nodosus (strain VCS1703A), this protein is 2,3-bisphosphoglycerate-dependent phosphoglycerate mutase.